Here is a 147-residue protein sequence, read N- to C-terminus: Large ribosomal subunit protein uL13 (147 aa).

This sequence belongs to the universal ribosomal protein uL13 family. In terms of assembly, part of the 50S ribosomal subunit.

This protein is one of the early assembly proteins of the 50S ribosomal subunit, although it is not seen to bind rRNA by itself. It is important during the early stages of 50S assembly. The polypeptide is Large ribosomal subunit protein uL13 (Limosilactobacillus fermentum (strain NBRC 3956 / LMG 18251) (Lactobacillus fermentum)).